The following is a 78-amino-acid chain: Major outer membrane lipoprotein Lpp (78 aa).

The N-terminal stretch at 1-20 (MNRTKIVLGAVVLASTLLAG) is a signal peptide. The N-palmitoyl cysteine moiety is linked to residue cysteine 21. Cysteine 21 carries the S-diacylglycerol cysteine lipid modification. 2 repeats span residues 24-34 (TAKVDQLTSDI) and 38-48 (NAKVDQLSNDV). Positions 27-75 (VDQLTSDIQTLNAKVDQLSNDVNAVHTDVQAAKDDAARANQRLDNQVRS) form a coiled coil. Residue lysine 78 is modified to N6-murein peptidoglycan lysine.

This sequence belongs to the Lpp family. Homotrimer.

The protein resides in the cell outer membrane. It is found in the secreted. It localises to the cell wall. Functionally, a highly abundant outer membrane lipoprotein that controls the distance between the inner and outer membranes. The only protein known to be covalently linked to the peptidoglycan network (PGN). Also non-covalently binds the PGN. The link between the cell outer membrane and PGN contributes to maintenance of the structural and functional integrity of the cell envelope, and maintains the correct distance between the PGN and the outer membrane. The sequence is that of Major outer membrane lipoprotein Lpp from Photorhabdus laumondii subsp. laumondii (strain DSM 15139 / CIP 105565 / TT01) (Photorhabdus luminescens subsp. laumondii).